The sequence spans 95 residues: MLHTLMTSPFRCDLSAILRLLAAGDDVLLLQDGVIAALDGSAPLEALLKAPINLYVLKEDLEARGLLAQISPRATVVGYTDFIQLAVRNPQQMAW.

This sequence belongs to the DsrH/TusB family. Heterohexamer, formed by a dimer of trimers. The hexameric TusBCD complex contains 2 copies each of TusB, TusC and TusD. The TusBCD complex interacts with TusE.

Its subcellular location is the cytoplasm. In terms of biological role, part of a sulfur-relay system required for 2-thiolation of 5-methylaminomethyl-2-thiouridine (mnm(5)s(2)U) at tRNA wobble positions. The sequence is that of Protein TusB from Erwinia tasmaniensis (strain DSM 17950 / CFBP 7177 / CIP 109463 / NCPPB 4357 / Et1/99).